Here is a 710-residue protein sequence, read N- to C-terminus: Ferrioxamine receptor (710 aa).

Positions 1 to 26 (MFSAFIIKRSAILCSLAMFIPLASIA) are cleaved as a signal peptide. The short motif at 28 to 35 (DTIEVTAK) is the TonB box element. 30 beta stranded membrane passes run 29-37 (TIEVTAKAG), 65-73 (TAQSVSVVT), 91-99 (YTPGVFTGF), 106-114 (YDTVALRGF), 137-145 (NVLQVDPWF), 152-160 (IKGPSSALY), 180-188 (SEGHFRLTA), 194-202 (QVAAFDYTD), 208-216 (WAFRLTGIT), 259-267 (GGYHSAVPA), 271-279 (IYGQKLSRG), 293-301 (WQQIYSYEF), 309-317 (WSFRQNASY), 353-361 (FAVDNQLEA), 370-378 (HKVLLGVDF), 427-435 (YEQSGVYLQ), 443-451 (WHLNLSGRY), 476-484 (GRASLLYSF), 491-499 (YVSYSQAIT), 517-525 (EQYEVGIIY), 531-539 (TSLYSAALY), 555-563 (YYVPAGKVN), 567-575 (LELEARSQI), 579-587 (LSVIAGYTY), 610-618 (NMASLWAQY), 624-632 (INVGAGIRY), 649-657 (YTLGDASVR), 671-679 (FVQLNVNNI), 684-692 (YVAACYSTS), and 702-710 (VQATVGYDF). Residues 61–174 (PLILTAQSVS…PGGVVMMTSK (114 aa)) form the TBDR plug domain. The TBDR beta-barrel domain maps to 181–710 (EGHFRLTAGN…SVQATVGYDF (530 aa)). Residues 693 to 710 (YCYWGAERSVQATVGYDF) carry the TonB C-terminal box motif.

This sequence belongs to the TonB-dependent receptor family.

Its subcellular location is the cell outer membrane. Functionally, ferrioxamine binding and uptake, in association with the TonB protein. In Yersinia enterocolitica, this protein is Ferrioxamine receptor (foxA).